The following is a 1312-amino-acid chain: DNA repair protein RAD50.L (1312 aa).

10 residues coordinate ATP: Arg-13, Asn-38, Gly-39, Gly-41, Lys-42, Thr-43, Thr-44, Val-67, Asp-69, and Gln-159. Residue Thr-43 participates in Mg(2+) binding. Gln-159 serves as a coordination point for Mg(2+). Coiled-coil stretches lie at residues 203-342 (VREY…LNRE), 415-558 (LREF…IKSR), and 587-628 (INQT…FEEK). The 100-residue stretch at 635–734 (SQDFDSDLSR…RKDDMMELKP (100 aa)) folds into the Zinc-hook domain. Zn(2+) contacts are provided by Cys-681 and Cys-684. The stretch at 712–1070 (LKSAEGELKR…ENKSESLKTN (359 aa)) forms a coiled coil.

This sequence belongs to the SMC family. RAD50 subfamily. In terms of assembly, component of the MRN complex composed of two heterodimers RAD50 and MRE11 associated with a single NBN. It depends on Zn(2+) as a cofactor.

It is found in the nucleus. Its subcellular location is the chromosome. The protein localises to the telomere. It catalyses the reaction ATP + H2O = ADP + phosphate + H(+). In terms of biological role, component of the MRN complex, which plays a central role in double-strand break (DSB) repair, DNA recombination, maintenance of telomere integrity and meiosis. The MRN complex is involved in the repair of DNA double-strand breaks (DSBs) via homologous recombination (HR), an error-free mechanism which primarily occurs during S and G2 phases. The complex (1) mediates the end resection of damaged DNA, which generates proper single-stranded DNA, a key initial steps in HR, and is (2) required for the recruitment of other repair factors and efficient activation of ATM and ATR upon DNA damage. The MRN complex possesses single-strand endonuclease activity and double-strand-specific 3'-5' exonuclease activity, which are provided by mre11, to initiate end resection, which is required for single-strand invasion and recombination. Within the complex, rad50 is both required to bind DNA ends and hold them in close proximity and regulate the activity of MRE11. Rad50 provides an ATP-dependent control of MRE11 by positioning DNA ends into the mre11 active site: ATP-binding induces a large structural change from an open form with accessible MRE11 nuclease sites into a closed form. The MRN complex is also required for DNA damage signaling via activation of the atm and atr kinases: the nuclease activity of mre11 is not required to activate ATM and ATR. The MRN complex promotes recruitment of topbp1 to DNA damage sites. The MRN complex and rbbp8/CtIP are also required for chromosome alignment during metaphase. The polypeptide is DNA repair protein RAD50.L (Xenopus laevis (African clawed frog)).